The sequence spans 450 residues: Phosphoglucosamine mutase (450 aa).

Serine 102 serves as the catalytic Phosphoserine intermediate. Mg(2+) contacts are provided by serine 102, aspartate 242, aspartate 244, and aspartate 246. Position 102 is a phosphoserine (serine 102).

This sequence belongs to the phosphohexose mutase family. It depends on Mg(2+) as a cofactor. In terms of processing, activated by phosphorylation.

It catalyses the reaction alpha-D-glucosamine 1-phosphate = D-glucosamine 6-phosphate. In terms of biological role, catalyzes the conversion of glucosamine-6-phosphate to glucosamine-1-phosphate. The chain is Phosphoglucosamine mutase from Lachnospira eligens (strain ATCC 27750 / DSM 3376 / VPI C15-48 / C15-B4) (Eubacterium eligens).